Consider the following 144-residue polypeptide: Large ribosomal subunit protein uL15 (144 aa).

The segment at 1 to 51 (MKLNELKPATGSRSKRLRKGRGLSSGHGFTSGRGTKGQKAHGKTRLGFEGG) is disordered. Over residues 23 to 35 (LSSGHGFTSGRGT) the composition is skewed to gly residues.

The protein belongs to the universal ribosomal protein uL15 family. In terms of assembly, part of the 50S ribosomal subunit.

Functionally, binds to the 23S rRNA. This is Large ribosomal subunit protein uL15 from Limosilactobacillus reuteri (strain DSM 20016) (Lactobacillus reuteri).